We begin with the raw amino-acid sequence, 248 residues long: Probable transcriptional regulatory protein Mpop_0922 (248 aa).

The protein belongs to the TACO1 family.

It localises to the cytoplasm. In Methylorubrum populi (strain ATCC BAA-705 / NCIMB 13946 / BJ001) (Methylobacterium populi), this protein is Probable transcriptional regulatory protein Mpop_0922.